A 293-amino-acid chain; its full sequence is AA9 family lytic polysaccharide monooxygenase E (293 aa).

Residues 1–19 (MKGLLSVAALSLAVSEVSA) form the signal peptide. 2 residues coordinate Cu(2+): His-20 and His-90. An intrachain disulfide couples Cys-59 to Cys-172. 2 residues coordinate O2: His-158 and Gln-167. Position 169 (Tyr-169) interacts with Cu(2+). The region spanning 257 to 293 (CAVAKWGQCGGNGWTGCTTCAAGSTCNTQNAYYHQCV) is the CBM1 domain.

The protein belongs to the polysaccharide monooxygenase AA9 family. Requires Cu(2+) as cofactor.

The protein resides in the secreted. The enzyme catalyses [(1-&gt;4)-beta-D-glucosyl]n+m + reduced acceptor + O2 = 4-dehydro-beta-D-glucosyl-[(1-&gt;4)-beta-D-glucosyl]n-1 + [(1-&gt;4)-beta-D-glucosyl]m + acceptor + H2O.. Glucose dehydrogenase and aryl-alcohol quinone oxidoreductases regulate the oxidative degradation of cellulose since they can act as catalytically efficient electron donors for LPMO9E. In terms of biological role, lytic polysaccharide monooxygenase (LPMO) that depolymerizes crystalline and amorphous polysaccharides via the oxidation of scissile alpha- or beta-(1-4)-glycosidic bonds, yielding only C1 oxidation products. Catalysis by LPMOs requires the reduction of the active-site copper from Cu(II) to Cu(I) by a reducing agent and H(2)O(2) or O(2) as a cosubstrate. Improves the progression of lytic enzymes in delignified miscanthus cell walls. This boosting effect dependents on the cellular type which indicates contrasted recalcitrance levels in plant tissues. The protein is AA9 family lytic polysaccharide monooxygenase E of Podospora anserina (strain S / ATCC MYA-4624 / DSM 980 / FGSC 10383) (Pleurage anserina).